Consider the following 209-residue polypeptide: A-type ATP synthase subunit D (209 aa).

Belongs to the V-ATPase D subunit family. Has multiple subunits with at least A(3), B(3), C, D, E, F, H, I and proteolipid K(x).

The protein resides in the cell membrane. In terms of biological role, component of the A-type ATP synthase that produces ATP from ADP in the presence of a proton gradient across the membrane. The polypeptide is A-type ATP synthase subunit D (Thermoplasma volcanium (strain ATCC 51530 / DSM 4299 / JCM 9571 / NBRC 15438 / GSS1)).